A 688-amino-acid polypeptide reads, in one-letter code: Translation initiation factor IF-2 (688 aa).

Residues 53–101 form a disordered region; it reads GAEKPSVADEFEVEEKVVRSKKNSNKNKKKGKANEDKRQDNFAGRQQTP. Positions 71–83 are enriched in basic residues; the sequence is RSKKNSNKNKKKG. A tr-type G domain is found at 190–359; it reads ERPAVVTIMG…LLVSEVEEYK (170 aa). The interval 199 to 206 is G1; it reads GHVDHGKT. 199–206 is a binding site for GTP; sequence GHVDHGKT. A G2 region spans residues 224–228; it reads GITQH. The G3 stretch occupies residues 245-248; it reads DTPG. GTP-binding positions include 245–249 and 299–302; these read DTPGH and NKMD. Residues 299 to 302 are G4; the sequence is NKMD. The G5 stretch occupies residues 335 to 337; the sequence is SAI.

It belongs to the TRAFAC class translation factor GTPase superfamily. Classic translation factor GTPase family. IF-2 subfamily.

It is found in the cytoplasm. Its function is as follows. One of the essential components for the initiation of protein synthesis. Protects formylmethionyl-tRNA from spontaneous hydrolysis and promotes its binding to the 30S ribosomal subunits. Also involved in the hydrolysis of GTP during the formation of the 70S ribosomal complex. This Bacillus mycoides (strain KBAB4) (Bacillus weihenstephanensis) protein is Translation initiation factor IF-2.